Reading from the N-terminus, the 115-residue chain is Promotilin (115 aa).

Positions 1-25 are cleaved as a signal peptide; it reads MLSRKATAILLVVHAAAMLASQTEG. The interval 43–73 is disordered; it reads RYKGQKKSLSVQQRSEEVGPVDPAEPREEKQ.

This sequence belongs to the motilin family.

The protein localises to the secreted. In terms of biological role, plays an important role in the regulation of interdigestive gastrointestinal motility and indirectly causes rhythmic contraction of duodenal and colonic smooth muscle. This is Promotilin (MLN) from Ovis aries (Sheep).